The chain runs to 98 residues: NADH-ubiquinone oxidoreductase chain 4L (98 aa).

A run of 3 helical transmembrane segments spans residues 1–21 (MSMMYFNIFMAFTVSLVGLLM), 29–49 (SLLCLEGMMLSLFVMMSVTIL), and 61–81 (IILLVFAACEAALGLSLLVMV).

It belongs to the complex I subunit 4L family. Core subunit of respiratory chain NADH dehydrogenase (Complex I) which is composed of 45 different subunits.

Its subcellular location is the mitochondrion inner membrane. It carries out the reaction a ubiquinone + NADH + 5 H(+)(in) = a ubiquinol + NAD(+) + 4 H(+)(out). Functionally, core subunit of the mitochondrial membrane respiratory chain NADH dehydrogenase (Complex I) which catalyzes electron transfer from NADH through the respiratory chain, using ubiquinone as an electron acceptor. Part of the enzyme membrane arm which is embedded in the lipid bilayer and involved in proton translocation. In Zalophus californianus (California sealion), this protein is NADH-ubiquinone oxidoreductase chain 4L (MT-ND4L).